The chain runs to 479 residues: ATP synthase subunit beta, chloroplastic (479 aa).

Residue 156-163 (GGAGVGKT) participates in ATP binding.

Belongs to the ATPase alpha/beta chains family. As to quaternary structure, F-type ATPases have 2 components, CF(1) - the catalytic core - and CF(0) - the membrane proton channel. CF(1) has five subunits: alpha(3), beta(3), gamma(1), delta(1), epsilon(1). CF(0) has four main subunits: a(1), b(1), b'(1) and c(9-12).

It localises to the plastid. Its subcellular location is the chloroplast thylakoid membrane. It catalyses the reaction ATP + H2O + 4 H(+)(in) = ADP + phosphate + 5 H(+)(out). In terms of biological role, produces ATP from ADP in the presence of a proton gradient across the membrane. The catalytic sites are hosted primarily by the beta subunits. This Trichomanes davallioides (Kilau fern) protein is ATP synthase subunit beta, chloroplastic.